We begin with the raw amino-acid sequence, 57 residues long: Delta-elapitoxin-Cb1a (57 aa).

Disulfide bonds link Cys3/Cys22, Cys15/Cys36, Cys40/Cys49, and Cys50/Cys55.

Belongs to the three-finger toxin family. Short-chain subfamily. In terms of tissue distribution, expressed by the venom gland.

The protein resides in the secreted. Its function is as follows. This toxin shifts the voltage-dependence of Nav1.4/SCN4A activation to more hyperpolarised potentials, inhibits inactivation, and produces large ramp currents, consistent with its profound effects on contractile force in an isolated skeletal muscle preparation. This toxin produces large muscle contractions and fasciculations in the indirectly stimulated chick biventer cervicis nerve-muscle assay, which are significantly inhibited by the addition of the sodium channel antagonist tetrodotoxin. The sequence is that of Delta-elapitoxin-Cb1a from Calliophis bivirgatus (Blue Malaysian coral snake).